A 127-amino-acid chain; its full sequence is Small ribosomal subunit protein uS11 (127 aa).

This sequence belongs to the universal ribosomal protein uS11 family. In terms of assembly, part of the 30S ribosomal subunit. Interacts with proteins S7 and S18. Binds to IF-3.

Its function is as follows. Located on the platform of the 30S subunit, it bridges several disparate RNA helices of the 16S rRNA. Forms part of the Shine-Dalgarno cleft in the 70S ribosome. The chain is Small ribosomal subunit protein uS11 from Rickettsia rickettsii (strain Iowa).